A 306-amino-acid chain; its full sequence is Pantothenate kinase (306 aa).

91 to 98 (GSVAVGKS) provides a ligand contact to ATP.

It belongs to the prokaryotic pantothenate kinase family.

It localises to the cytoplasm. The enzyme catalyses (R)-pantothenate + ATP = (R)-4'-phosphopantothenate + ADP + H(+). The protein operates within cofactor biosynthesis; coenzyme A biosynthesis; CoA from (R)-pantothenate: step 1/5. The chain is Pantothenate kinase from Streptococcus equi subsp. zooepidemicus (strain MGCS10565).